Reading from the N-terminus, the 744-residue chain is 6-phosphofructo-2-kinase/fructose-2,6-bisphosphatase (744 aa).

Disordered regions lie at residues 1–23 (MGSG…GGQL) and 213–245 (RSLS…DGSP). Gly2 carries N-myristoyl glycine lipidation. Positions 17 to 122 (NGGGGQLYVS…GDARLALFRL (106 aa)) constitute a CBM20 domain. Residues 213–232 (RSLSASGSFRNDSTPKAAQR) show a composition bias toward polar residues. At Ser220 the chain carries Phosphoserine; by CPK3. A phosphoserine mark is found at Ser276 and Ser295. A 6-phosphofructo-2-kinase region spans residues 301–549 (SLSASSFLID…VFFLVNTHLT (249 aa)). Position 303 is a phosphoserine; by CPK3 (Ser303). 349-357 (GLPARGKTF) lines the ATP pocket. Beta-D-fructose 6-phosphate is bound by residues Arg382 and Arg406. Asp431 is an active-site residue. Thr433 and Arg439 together coordinate beta-D-fructose 6-phosphate. Residue Cys460 is part of the active site. Residue 469–474 (NIRLKI) coordinates ATP. 2 residues coordinate beta-D-fructose 6-phosphate: Arg496 and Tyr500. Residues 550–744 (PRPILLTRHG…VQEKRYKLMD (195 aa)) are fructose-2,6-bisphosphatase. Arg557 serves as a coordination point for beta-D-fructose 2,6-bisphosphate. His558 functions as the Tele-phosphohistidine intermediate in the catalytic mechanism. 2 residues coordinate beta-D-fructose 2,6-bisphosphate: Asn564 and Gly570. Catalysis depends on Glu630, which acts as the Proton donor/acceptor. Beta-D-fructose 2,6-bisphosphate-binding residues include Tyr641, Arg655, Lys659, Tyr670, Gln697, and Arg701. Residue 652–655 (YESR) coordinates ATP. Residue 697–701 (QAVLR) coordinates ATP.

It in the C-terminal section; belongs to the phosphoglycerate mutase family. In terms of assembly, interacts with 14-3-3 proteins; these interactions may regulate both nitrate assimilation and sucrose/starch partitioning in leaves during the diurnal cycle. Post-translationally, phosphorylation at Ser-220 and Ser-303 by CPK3 promotes 14-3-3 proteins binding.

The protein resides in the membrane. Its subcellular location is the cytoplasm. It catalyses the reaction beta-D-fructose 2,6-bisphosphate + H2O = beta-D-fructose 6-phosphate + phosphate. It carries out the reaction beta-D-fructose 6-phosphate + ATP = beta-D-fructose 2,6-bisphosphate + ADP + H(+). Its activity is regulated as follows. 6-phosphofructo-2-kinase activity is activated by pyruvate. 6-phosphofructo-2-kinase activity is inhibited by PPi, phosphoenolpyruvate and 2-phosphoglycerate. Fructose-2,6-bisphosphatase activity is inhibited by pyruvate, fructose 1,6-bisphosphate and 6-phosphogluconate. In terms of biological role, synthesis and degradation of fructose 2,6-bisphosphate. Regulates carbon partitioning between sucrose versus starch during the diurnal cycle. This is 6-phosphofructo-2-kinase/fructose-2,6-bisphosphatase (FKFBP) from Arabidopsis thaliana (Mouse-ear cress).